A 643-amino-acid polypeptide reads, in one-letter code: Phosphomethylpyrimidine synthase (643 aa).

Substrate is bound by residues Asn248, Met277, Tyr306, His342, 362–364 (SRG), 403–406 (DGLR), and Glu442. His446 serves as a coordination point for Zn(2+). Tyr469 contacts substrate. Position 510 (His510) interacts with Zn(2+). [4Fe-4S] cluster is bound by residues Cys590, Cys593, and Cys598.

Belongs to the ThiC family. As to quaternary structure, homodimer. [4Fe-4S] cluster is required as a cofactor.

It catalyses the reaction 5-amino-1-(5-phospho-beta-D-ribosyl)imidazole + S-adenosyl-L-methionine = 4-amino-2-methyl-5-(phosphooxymethyl)pyrimidine + CO + 5'-deoxyadenosine + formate + L-methionine + 3 H(+). The protein operates within cofactor biosynthesis; thiamine diphosphate biosynthesis. In terms of biological role, catalyzes the synthesis of the hydroxymethylpyrimidine phosphate (HMP-P) moiety of thiamine from aminoimidazole ribotide (AIR) in a radical S-adenosyl-L-methionine (SAM)-dependent reaction. This Burkholderia multivorans (strain ATCC 17616 / 249) protein is Phosphomethylpyrimidine synthase.